The following is a 184-amino-acid chain: ADP-ribosylation factor-like protein 2 (184 aa).

Glycine 2 carries the N-myristoyl glycine lipid modification. GTP contacts are provided by residues glycine 23–threonine 30, aspartate 66–glutamine 70, and asparagine 125–aspartate 128.

The protein belongs to the small GTPase superfamily. Arf family. As to expression, ubiquitously expressed.

Its function is as follows. GTP-binding protein involved in protein trafficking; may modulate vesicle budding and uncoating within the Golgi apparatus. In Drosophila melanogaster (Fruit fly), this protein is ADP-ribosylation factor-like protein 2 (Arl2).